An 827-amino-acid chain; its full sequence is Copper-transporting ATPase 2 (827 aa).

HMA domains lie at 15 to 80 (VSTN…YAPR) and 82 to 148 (ATEE…YELR). Cu cation-binding residues include cysteine 26, cysteine 29, cysteine 93, and cysteine 96. 6 consecutive transmembrane segments (helical) span residues 174-194 (VTIS…SHFI), 210-230 (NLYL…LRFF), 246-266 (SLVV…TFVP), 271-291 (SGTA…VLLG), 430-450 (GWFV…WYTF), and 458-478 (FALV…MGLA). The 4-aspartylphosphate intermediate role is filled by aspartate 515. Mg(2+)-binding residues include aspartate 714 and aspartate 718. The next 2 helical transmembrane spans lie at 771-793 (NLFW…LYPV) and 797-819 (LLSP…GNAL).

The protein belongs to the cation transport ATPase (P-type) (TC 3.A.3) family. Type IB subfamily.

It localises to the cell membrane. It carries out the reaction Cu(2+)(in) + ATP + H2O = Cu(2+)(out) + ADP + phosphate + H(+). In terms of biological role, involved in copper transport. The polypeptide is Copper-transporting ATPase 2 (actP2) (Rhizobium meliloti (strain 1021) (Ensifer meliloti)).